Here is a 265-residue protein sequence, read N- to C-terminus: Small ribosomal subunit protein uS2 (265 aa).

Residues 226–265 (AAAPNSASVREEEFSADAADEGKGRRAPAKKGDKKADAAE) are disordered. Residues 245–265 (DEGKGRRAPAKKGDKKADAAE) show a composition bias toward basic and acidic residues.

The protein belongs to the universal ribosomal protein uS2 family.

The chain is Small ribosomal subunit protein uS2 from Xanthomonas axonopodis pv. citri (strain 306).